We begin with the raw amino-acid sequence, 588 residues long: Proteasome-associated ATPase (588 aa).

Residues 1–10 (MAAHDDDMNR) are compositionally biased toward basic and acidic residues. The segment at 1 to 23 (MAAHDDDMNRGIRPGRGSDDPAG) is disordered. The stretch at 47–94 (RILEERIVELQTNLAGVSAQNERLANTLREARDQIVALKEEVDRLAQP) forms a coiled coil. An ATP-binding site is contributed by 276–281 (GCGKTL). The docks into pockets in the proteasome alpha-ring stretch occupies residues 587-588 (YL).

This sequence belongs to the AAA ATPase family. Homohexamer. Assembles into a hexameric ring structure that caps the 20S proteasome core. Strongly interacts with the prokaryotic ubiquitin-like protein Pup through a hydrophobic interface; the interacting region of ARC lies in its N-terminal coiled-coil domain. There is one Pup binding site per ARC hexamer ring. Upon ATP-binding, the C-terminus of ARC interacts with the alpha-rings of the proteasome core, possibly by binding to the intersubunit pockets.

It participates in protein degradation; proteasomal Pup-dependent pathway. Its function is as follows. ATPase which is responsible for recognizing, binding, unfolding and translocation of pupylated proteins into the bacterial 20S proteasome core particle. May be essential for opening the gate of the 20S proteasome via an interaction with its C-terminus, thereby allowing substrate entry and access to the site of proteolysis. Thus, the C-termini of the proteasomal ATPase may function like a 'key in a lock' to induce gate opening and therefore regulate proteolysis. The protein is Proteasome-associated ATPase of Streptomyces avermitilis (strain ATCC 31267 / DSM 46492 / JCM 5070 / NBRC 14893 / NCIMB 12804 / NRRL 8165 / MA-4680).